Reading from the N-terminus, the 100-residue chain is Urease subunit gamma (100 aa).

The protein belongs to the urease gamma subunit family. In terms of assembly, heterotrimer of UreA (gamma), UreB (beta) and UreC (alpha) subunits. Three heterotrimers associate to form the active enzyme.

It is found in the cytoplasm. It catalyses the reaction urea + 2 H2O + H(+) = hydrogencarbonate + 2 NH4(+). It participates in nitrogen metabolism; urea degradation; CO(2) and NH(3) from urea (urease route): step 1/1. The polypeptide is Urease subunit gamma (Vibrio parahaemolyticus).